The chain runs to 721 residues: Procollagen-lysine,2-oxoglutarate 5-dioxygenase (721 aa).

Positions 1–21 are cleaved as a signal peptide; that stretch reads MRIQQSALLLLLLAVTSQGDA. N-linked (GlcNAc...) asparagine glycosylation is found at Asn-504, Asn-530, and Asn-536. Residues 627-721 enclose the Fe2OG dioxygenase domain; that stretch reads NPPRALMNFM…RYIMISFIDP (95 aa). Fe cation contacts are provided by His-650 and Asp-652. N-linked (GlcNAc...) asparagine glycosylation occurs at Asn-680. His-702 provides a ligand contact to Fe cation. N-linked (GlcNAc...) asparagine glycosylation is present at Asn-709. Arg-712 serves as a coordination point for 2-oxoglutarate.

The cofactor is L-ascorbate. Fe(2+) is required as a cofactor.

It is found in the endoplasmic reticulum. Its subcellular location is the secreted. The protein resides in the extracellular space. It carries out the reaction L-lysyl-[collagen] + 2-oxoglutarate + O2 = (5R)-5-hydroxy-L-lysyl-[collagen] + succinate + CO2. In terms of biological role, forms hydroxylysine residues in collagen type IV. Required for the secretion of collagen type IV (vkg) from haemocytes, fat body and follicle cells. The chain is Procollagen-lysine,2-oxoglutarate 5-dioxygenase from Drosophila melanogaster (Fruit fly).